Reading from the N-terminus, the 630-residue chain is tRNA uridine 5-carboxymethylaminomethyl modification enzyme MnmG (630 aa).

Gly-15–Gly-20 is an FAD binding site. Gly-274–Phe-288 is a binding site for NAD(+).

This sequence belongs to the MnmG family. In terms of assembly, homodimer. Heterotetramer of two MnmE and two MnmG subunits. FAD serves as cofactor.

It is found in the cytoplasm. Its function is as follows. NAD-binding protein involved in the addition of a carboxymethylaminomethyl (cmnm) group at the wobble position (U34) of certain tRNAs, forming tRNA-cmnm(5)s(2)U34. This is tRNA uridine 5-carboxymethylaminomethyl modification enzyme MnmG from Alkaliphilus oremlandii (strain OhILAs) (Clostridium oremlandii (strain OhILAs)).